The sequence spans 86 residues: Small ribosomal subunit protein uS17 (86 aa).

The protein belongs to the universal ribosomal protein uS17 family. Part of the 30S ribosomal subunit.

One of the primary rRNA binding proteins, it binds specifically to the 5'-end of 16S ribosomal RNA. The chain is Small ribosomal subunit protein uS17 from Lactococcus lactis subsp. cremoris (strain MG1363).